The chain runs to 491 residues: Ketol-acid reductoisomerase (NADP(+)) (491 aa).

In terms of domain architecture, KARI N-terminal Rossmann spans 15–208 (AQLGKCRFMG…GGHRAGVLES (194 aa)). Residues 45-48 (CGAQ), Arg68, Arg76, Ser78, and 108-110 (DKQ) each bind NADP(+). The active site involves His132. Gly158 serves as a coordination point for NADP(+). 2 KARI C-terminal knotted domains span residues 209 to 344 (SFVA…TAPQ) and 345 to 484 (FEGK…MTDM). Residues Asp217, Glu221, Glu389, and Glu393 each contribute to the Mg(2+) site. Ser414 serves as a coordination point for substrate.

This sequence belongs to the ketol-acid reductoisomerase family. Mg(2+) serves as cofactor.

The enzyme catalyses (2R)-2,3-dihydroxy-3-methylbutanoate + NADP(+) = (2S)-2-acetolactate + NADPH + H(+). The catalysed reaction is (2R,3R)-2,3-dihydroxy-3-methylpentanoate + NADP(+) = (S)-2-ethyl-2-hydroxy-3-oxobutanoate + NADPH + H(+). It participates in amino-acid biosynthesis; L-isoleucine biosynthesis; L-isoleucine from 2-oxobutanoate: step 2/4. It functions in the pathway amino-acid biosynthesis; L-valine biosynthesis; L-valine from pyruvate: step 2/4. In terms of biological role, involved in the biosynthesis of branched-chain amino acids (BCAA). Catalyzes an alkyl-migration followed by a ketol-acid reduction of (S)-2-acetolactate (S2AL) to yield (R)-2,3-dihydroxy-isovalerate. In the isomerase reaction, S2AL is rearranged via a Mg-dependent methyl migration to produce 3-hydroxy-3-methyl-2-ketobutyrate (HMKB). In the reductase reaction, this 2-ketoacid undergoes a metal-dependent reduction by NADPH to yield (R)-2,3-dihydroxy-isovalerate. This is Ketol-acid reductoisomerase (NADP(+)) from Salmonella agona (strain SL483).